The following is a 329-amino-acid chain: Minor capsid protein A1 (329 aa).

A disordered region spans residues 143–162 (GPSPVPGPNPDPPLEPPPGT). Residues 145–161 (SPVPGPNPDPPLEPPPG) are compositionally biased toward pro residues.

It is found in the virion. In terms of biological role, minor capsid protein. The polypeptide is Minor capsid protein A1 (Qbeta virus (strain MX1)).